Reading from the N-terminus, the 121-residue chain is Type II secretion system protein I (121 aa).

Positions 1 to 6 (MRRQKG) are cleaved as a propeptide — leader sequence. N-methylmethionine is present on Met-7. Residues 7-27 (MTLVEVLVALSVFALAGIAVL) form a helical membrane-spanning segment.

The protein belongs to the GSP I family. In terms of assembly, type II secretion is composed of four main components: the outer membrane complex, the inner membrane complex, the cytoplasmic secretion ATPase and the periplasm-spanning pseudopilus. Interacts with core component OutG. Post-translationally, cleaved by prepilin peptidase. In terms of processing, methylated by prepilin peptidase at the amino group of the N-terminal methionine once the leader sequence is cleaved by prepilin peptidase.

It localises to the cell inner membrane. Functionally, component of the type II secretion system required for the energy-dependent secretion of extracellular factors such as proteases and toxins from the periplasm. Part of the pseudopilus tip complex that is critical for the recognition and binding of secretion substrates. The protein is Type II secretion system protein I (outI) of Pectobacterium carotovorum subsp. carotovorum (Erwinia carotovora subsp. carotovora).